The sequence spans 200 residues: MSFSPLIRQLIDGLRILPGVGQKTAQRMALQLLERDRSGGLRLAQALTQAMEGVGHCRQCRTLTEQELCPQCADPRRDDTQLCVVEGPTDVYAVEQTGYRGRYFVLKGHLSPLDGLGPEAIGIPQLMARIEEQGTFTEVILATNPTVEGEATAHYIAQLLSEKGLVASRIAHGVPLGGELEMVDGGTLAHAFAGRRPISL.

The C4-type zinc-finger motif lies at 57–72 (CRQCRTLTEQELCPQC). Residues 80–175 (TQLCVVEGPT…VASRIAHGVP (96 aa)) enclose the Toprim domain.

It belongs to the RecR family.

Its function is as follows. May play a role in DNA repair. It seems to be involved in an RecBC-independent recombinational process of DNA repair. It may act with RecF and RecO. The sequence is that of Recombination protein RecR from Pseudomonas putida (strain ATCC 700007 / DSM 6899 / JCM 31910 / BCRC 17059 / LMG 24140 / F1).